A 398-amino-acid chain; its full sequence is Cell cycle checkpoint control protein RAD9B (398 aa).

A compositionally biased stretch (polar residues) spans 272-281 (RTSSPQSLRL). A disordered region spans residues 272–359 (RTSSPQSLRL…DMEEGQSPSP (88 aa)). Positions 324–336 (SSSAAETRRASAS) are enriched in low complexity. Ser349 and Ser358 each carry phosphoserine.

It belongs to the rad9 family. Interacts with HUS1, HUS1B, RAD1, RAD9A and RAD17.

This Rattus norvegicus (Rat) protein is Cell cycle checkpoint control protein RAD9B (Rad9b).